A 119-amino-acid chain; its full sequence is Large ribosomal subunit protein bL20 (119 aa).

Belongs to the bacterial ribosomal protein bL20 family.

Binds directly to 23S ribosomal RNA and is necessary for the in vitro assembly process of the 50S ribosomal subunit. It is not involved in the protein synthesizing functions of that subunit. This Nitrobacter hamburgensis (strain DSM 10229 / NCIMB 13809 / X14) protein is Large ribosomal subunit protein bL20.